Here is a 72-residue protein sequence, read N- to C-terminus: Putative sodium channel toxin Ts18 (72 aa).

The signal sequence occupies residues 1–21 (MNFRFPFLLMITISLIGAVLT). Disulfide bonds link Cys38/Cys61, Cys47/Cys66, and Cys51/Cys68.

The protein belongs to the long (3 C-C) scorpion toxin superfamily. In terms of tissue distribution, expressed by the venom gland.

The protein resides in the secreted. Functionally, binds to sodium channels (Nav) and affects the channel activation process. This chain is Putative sodium channel toxin Ts18, found in Tityus serrulatus (Brazilian scorpion).